The primary structure comprises 1050 residues: Isoleucine--tRNA ligase (1050 aa).

Residues 45 to 56 carry the 'HIGH' region motif; that stretch reads PYPSSPIPHIGT. Positions 594–598 match the 'KMSKS' region motif; sequence EMHKS. Residue K597 coordinates ATP.

It belongs to the class-I aminoacyl-tRNA synthetase family. IleS type 2 subfamily. Monomer. It depends on Zn(2+) as a cofactor.

It is found in the cytoplasm. The enzyme catalyses tRNA(Ile) + L-isoleucine + ATP = L-isoleucyl-tRNA(Ile) + AMP + diphosphate. Its function is as follows. Catalyzes the attachment of isoleucine to tRNA(Ile). As IleRS can inadvertently accommodate and process structurally similar amino acids such as valine, to avoid such errors it has two additional distinct tRNA(Ile)-dependent editing activities. One activity is designated as 'pretransfer' editing and involves the hydrolysis of activated Val-AMP. The other activity is designated 'posttransfer' editing and involves deacylation of mischarged Val-tRNA(Ile). The polypeptide is Isoleucine--tRNA ligase (Sulfolobus acidocaldarius (strain ATCC 33909 / DSM 639 / JCM 8929 / NBRC 15157 / NCIMB 11770)).